The primary structure comprises 302 residues: Ribosomal RNA small subunit methyltransferase H (302 aa).

S-adenosyl-L-methionine-binding positions include 34–36 (AGH), Asp-53, Phe-80, Asp-101, and Gln-108. A disordered region spans residues 283-302 (LEENPRSKSAKMRVLKKIER). Residues 290–302 (KSAKMRVLKKIER) show a composition bias toward basic residues.

This sequence belongs to the methyltransferase superfamily. RsmH family.

The protein localises to the cytoplasm. It catalyses the reaction cytidine(1402) in 16S rRNA + S-adenosyl-L-methionine = N(4)-methylcytidine(1402) in 16S rRNA + S-adenosyl-L-homocysteine + H(+). Its function is as follows. Specifically methylates the N4 position of cytidine in position 1402 (C1402) of 16S rRNA. This Mycoplasma mobile (strain ATCC 43663 / 163K / NCTC 11711) (Mesomycoplasma mobile) protein is Ribosomal RNA small subunit methyltransferase H.